Reading from the N-terminus, the 143-residue chain is Granulocyte-macrophage colony-stimulating factor (143 aa).

The first 17 residues, 1 to 17, serve as a signal peptide directing secretion; sequence MWLQNLLLLGTVVCSFS. A glycan (O-linked (GalNAc...) threonine) is linked at Thr27. N-linked (GlcNAc...) asparagine glycans are attached at residues Asn44 and Asn54. 2 disulfide bridges follow: Cys70–Cys112 and Cys104–Cys137.

Belongs to the GM-CSF family. In terms of assembly, monomer. The signaling GM-CSF receptor complex is a dodecamer of two head-to-head hexamers of two alpha, two beta, and two ligand subunits.

It localises to the secreted. Cytokine that stimulates the growth and differentiation of hematopoietic precursor cells from various lineages, including granulocytes, macrophages, eosinophils and erythrocytes. This Bos taurus (Bovine) protein is Granulocyte-macrophage colony-stimulating factor (CSF2).